The chain runs to 201 residues: Potassium-transporting ATPase KdpC subunit (201 aa).

A helical transmembrane segment spans residues 7–29 (PALVLLTALTAITGLAYPLAMTG).

The protein belongs to the KdpC family. The system is composed of three essential subunits: KdpA, KdpB and KdpC.

It localises to the cell inner membrane. In terms of biological role, part of the high-affinity ATP-driven potassium transport (or Kdp) system, which catalyzes the hydrolysis of ATP coupled with the electrogenic transport of potassium into the cytoplasm. This subunit acts as a catalytic chaperone that increases the ATP-binding affinity of the ATP-hydrolyzing subunit KdpB by the formation of a transient KdpB/KdpC/ATP ternary complex. This is Potassium-transporting ATPase KdpC subunit from Methylorubrum populi (strain ATCC BAA-705 / NCIMB 13946 / BJ001) (Methylobacterium populi).